We begin with the raw amino-acid sequence, 326 residues long: ATP-dependent 6-phosphofructokinase (326 aa).

Residue Gly14 coordinates ATP. Residue 24–28 (RAVVR) coordinates ADP. ATP is bound by residues 75-76 (RF) and 105-108 (GNGS). Asn106 contacts Mg(2+). 129-131 (TID) contributes to the substrate binding site. The active-site Proton acceptor is Asp131. Residue Arg158 coordinates ADP. Substrate contacts are provided by residues Arg166 and 173–175 (MGR). Residues 189-191 (GAE), Lys215, and 216-218 (KSA) each bind ADP. Residues Glu225, Arg248, and 254–257 (HTQR) contribute to the substrate site.

This sequence belongs to the phosphofructokinase type A (PFKA) family. ATP-dependent PFK group I subfamily. Prokaryotic clade 'B1' sub-subfamily. In terms of assembly, homotetramer. Mg(2+) serves as cofactor.

It is found in the cytoplasm. The catalysed reaction is beta-D-fructose 6-phosphate + ATP = beta-D-fructose 1,6-bisphosphate + ADP + H(+). It participates in carbohydrate degradation; glycolysis; D-glyceraldehyde 3-phosphate and glycerone phosphate from D-glucose: step 3/4. Its activity is regulated as follows. Allosterically activated by ADP and other diphosphonucleosides, and allosterically inhibited by phosphoenolpyruvate. Functionally, catalyzes the phosphorylation of D-fructose 6-phosphate to fructose 1,6-bisphosphate by ATP, the first committing step of glycolysis. The polypeptide is ATP-dependent 6-phosphofructokinase (Coxiella burnetii (strain RSA 493 / Nine Mile phase I)).